We begin with the raw amino-acid sequence, 253 residues long: Ribonuclease HII (253 aa).

The RNase H type-2 domain occupies 70–253; the sequence is NLIAGIDEVG…KSFEPIKSML (184 aa). A divalent metal cation is bound by residues Asp76, Glu77, and Asp168.

The protein belongs to the RNase HII family. Requires Mn(2+) as cofactor. The cofactor is Mg(2+).

The protein resides in the cytoplasm. The catalysed reaction is Endonucleolytic cleavage to 5'-phosphomonoester.. Its function is as follows. Endonuclease that specifically degrades the RNA of RNA-DNA hybrids. The polypeptide is Ribonuclease HII (Streptococcus agalactiae serotype Ia (strain ATCC 27591 / A909 / CDC SS700)).